Here is a 281-residue protein sequence, read N- to C-terminus: 4-deoxy-L-threo-5-hexosulose-uronate ketol-isomerase (281 aa).

Zn(2+) is bound by residues histidine 198, histidine 200, glutamate 205, and histidine 248.

It belongs to the KduI family. Zn(2+) serves as cofactor.

It catalyses the reaction 5-dehydro-4-deoxy-D-glucuronate = 3-deoxy-D-glycero-2,5-hexodiulosonate. Its pathway is glycan metabolism; pectin degradation; 2-dehydro-3-deoxy-D-gluconate from pectin: step 4/5. Functionally, catalyzes the isomerization of 5-dehydro-4-deoxy-D-glucuronate to 3-deoxy-D-glycero-2,5-hexodiulosonate. The protein is 4-deoxy-L-threo-5-hexosulose-uronate ketol-isomerase of Levilactobacillus brevis (strain ATCC 367 / BCRC 12310 / CIP 105137 / JCM 1170 / LMG 11437 / NCIMB 947 / NCTC 947) (Lactobacillus brevis).